A 302-amino-acid polypeptide reads, in one-letter code: Phosphoribosylaminoimidazole-succinocarboxamide synthase (302 aa).

This sequence belongs to the SAICAR synthetase family.

It carries out the reaction 5-amino-1-(5-phospho-D-ribosyl)imidazole-4-carboxylate + L-aspartate + ATP = (2S)-2-[5-amino-1-(5-phospho-beta-D-ribosyl)imidazole-4-carboxamido]succinate + ADP + phosphate + 2 H(+). It participates in purine metabolism; IMP biosynthesis via de novo pathway; 5-amino-1-(5-phospho-D-ribosyl)imidazole-4-carboxamide from 5-amino-1-(5-phospho-D-ribosyl)imidazole-4-carboxylate: step 1/2. The polypeptide is Phosphoribosylaminoimidazole-succinocarboxamide synthase (Cupriavidus pinatubonensis (strain JMP 134 / LMG 1197) (Cupriavidus necator (strain JMP 134))).